Reading from the N-terminus, the 598-residue chain is Torsin-1A-interacting protein 1 (598 aa).

At 1-351 the chain is on the nuclear side; sequence MAGEGRRAEA…PQNASFVKRN (351 aa). Disordered regions lie at residues 19–254 and 267–314; these read VTPR…RSSS and QNFT…IYGS. Ser60 is modified (phosphoserine). Composition is skewed to basic and acidic residues over residues 73–101 and 115–124; these read LVDK…EVRE and RPQEAEEMKT. Phosphoserine occurs at positions 135, 143, 154, 156, 157, and 187. Residues 205–214 show a composition bias toward polar residues; the sequence is EATSVQQKVN. Ser216 is modified (phosphoserine). Phosphothreonine is present on Thr221. A phosphoserine mark is found at Ser227, Ser230, and Ser242. Positions 238 to 250 are enriched in basic and acidic residues; that stretch reads RSRDSDESGDKTT. 2 stretches are compositionally biased toward polar residues: residues 277-287 and 300-313; these read SVLSSGYQKTP and RMQT…SIYG. Ser320 bears the Phosphoserine mark. A disordered region spans residues 322 to 341; it reads LKSELGNQSPSTSSQQVTGQ. A Glycyl lysine isopeptide (Lys-Gly) (interchain with G-Cter in SUMO2) cross-link involves residue Lys323. Polar residues predominate over residues 326 to 341; the sequence is LGNQSPSTSSQQVTGQ. Position 330 is a phosphoserine (Ser330). Residues 352–372 form a helical membrane-spanning segment; sequence WWWLLPLIAALASGSFWFFST. The interaction with TOR1A stretch occupies residues 371–598; sequence STPEVETTAV…ENALKRGICL (228 aa). The Perinuclear space segment spans residues 373-598; the sequence is PEVETTAVQE…ENALKRGICL (226 aa). A coiled-coil region spans residues 374–450; sequence EVETTAVQEF…SEQIADAYSS (77 aa). Residue Asn414 is glycosylated (N-linked (GlcNAc...) asparagine).

It belongs to the TOR1AIP family. Interacts with ATP1B4. Interacts with TOR1A (ATP-bound). Interacts with TOR1B, TOR2A and TOR3A.

Its subcellular location is the nucleus inner membrane. Functionally, required for nuclear membrane integrity. Induces TOR1A and TOR1B ATPase activity and is required for their location on the nuclear membrane. Binds to A- and B-type lamins. Possible role in membrane attachment and assembly of the nuclear lamina. The chain is Torsin-1A-interacting protein 1 (TOR1AIP1) from Pongo abelii (Sumatran orangutan).